Here is a 171-residue protein sequence, read N- to C-terminus: Probable chorismate pyruvate-lyase (171 aa).

Positions 36, 78, 116, and 157 each coordinate substrate.

Belongs to the UbiC family.

It localises to the cytoplasm. It catalyses the reaction chorismate = 4-hydroxybenzoate + pyruvate. It participates in cofactor biosynthesis; ubiquinone biosynthesis. In terms of biological role, removes the pyruvyl group from chorismate, with concomitant aromatization of the ring, to provide 4-hydroxybenzoate (4HB) for the ubiquinone pathway. The protein is Probable chorismate pyruvate-lyase of Bartonella bacilliformis (strain ATCC 35685 / KC583 / Herrer 020/F12,63).